Consider the following 270-residue polypeptide: Glutamate racemase (270 aa).

Substrate contacts are provided by residues 14-15 (DS) and 46-47 (YG). C77 acts as the Proton donor/acceptor in catalysis. 78 to 79 (NT) provides a ligand contact to substrate. C186 functions as the Proton donor/acceptor in the catalytic mechanism. Position 187–188 (187–188 (TH)) interacts with substrate.

This sequence belongs to the aspartate/glutamate racemases family.

It catalyses the reaction L-glutamate = D-glutamate. Its pathway is cell wall biogenesis; peptidoglycan biosynthesis. Functionally, provides the (R)-glutamate required for cell wall biosynthesis. This chain is Glutamate racemase, found in Trichodesmium erythraeum (strain IMS101).